The following is a 629-amino-acid chain: Phosphatidylinositol-3,5-bisphosphate 3-phosphatase MTMR8 (629 aa).

Positions 126–500 (GWKLIDLKVD…FSFQFWCGMY (375 aa)) constitute a Myotubularin phosphatase domain. Residues N250, N275, and I276 each coordinate a 1,2-diacyl-sn-glycero-3-phospho-(1D-myo-inositol-3,5-bisphosphate). A 1,2-diacyl-sn-glycero-3-phospho-(1D-myo-inositol-3-phosphate) is bound by residues N250, N275, and I276. C338 serves as the catalytic Phosphocysteine intermediate. Residues S339, D340, G341, W342, D343, R344, K380, and R384 each contribute to the a 1,2-diacyl-sn-glycero-3-phospho-(1D-myo-inositol-3,5-bisphosphate) site. A 1,2-diacyl-sn-glycero-3-phospho-(1D-myo-inositol-3-phosphate)-binding residues include S339, D340, G341, W342, D343, and R344. The phosphate site is built by S339 and D340. Positions 342, 343, and 344 each coordinate phosphate. R384 contacts a 1,2-diacyl-sn-glycero-3-phospho-(1D-myo-inositol-3-phosphate). The stretch at 517 to 543 (LLSCMNQKIKLEDNASELENKLPFLDG) forms a coiled coil.

The protein belongs to the protein-tyrosine phosphatase family. Non-receptor class myotubularin subfamily. Homodimer.

It is found in the nucleus envelope. It catalyses the reaction a 1,2-diacyl-sn-glycero-3-phospho-(1D-myo-inositol-3,5-bisphosphate) + H2O = a 1,2-diacyl-sn-glycero-3-phospho-(1D-myo-inositol-5-phosphate) + phosphate. The catalysed reaction is a 1,2-diacyl-sn-glycero-3-phospho-(1D-myo-inositol-3-phosphate) + H2O = a 1,2-diacyl-sn-glycero-3-phospho-(1D-myo-inositol) + phosphate. It carries out the reaction 1,2-dioctanoyl-sn-glycero-3-phospho-(1D-myo-inositol-3,5-bisphosphate) + H2O = 1,2-dioctanoyl-sn-glycero-3-phospho-(1D-myo-inositol-5-phosphate) + phosphate. Lipid phosphatase that specifically dephosphorylates the D-3 position of phosphatidylinositol 3-phosphate and phosphatidylinositol 3,5-bisphosphate, generating phosphatidylinositol and phosphatidylinositol 5-phosphate. The sequence is that of Phosphatidylinositol-3,5-bisphosphate 3-phosphatase MTMR8 from Gallus gallus (Chicken).